The primary structure comprises 2971 residues: Reticulocyte-binding protein homolog 1 (2971 aa).

The signal sequence occupies residues 1–20; sequence MQRWIFCNIVLHILIYLAEF. Over 21 to 2897 the chain is Extracellular; the sequence is SHEQESYSSN…KKQKNGNHER (2877 aa). The segment at 30–50 is disordered; sequence NEKIRKDYSDDNNYEPTPSYE. N-linked (GlcNAc...) asparagine glycans are attached at residues Asn70, Asn78, Asn87, Asn135, Asn286, Asn384, and Asn417. The tract at residues 500-833 is erythrocyte binding domain (EBD); it reads LQIVQQKLLE…MQQGYNNLTN (334 aa). 2 LRR repeats span residues 528–553 and 607–633; these read YKNI…NIKD and LNNL…ILQK. Asn685 carries an N-linked (GlcNAc...) asparagine glycan. LRR repeat units follow at residues 736-758 and 785-808; these read IDTI…VYTD and QETL…LLKE. 4 N-linked (GlcNAc...) asparagine glycosylation sites follow: Asn830, Asn892, Asn1000, and Asn1010. LRR repeat units follow at residues 993–1018 and 1356–1381; these read LKIL…TLND and LRNI…AHKE. An N-linked (GlcNAc...) asparagine glycan is attached at Asn1425. The stretch at 1466–1489 is one LRR 7 repeat; that stretch reads AKYMENIDTYKNNIEIISKQINPE. Asn1496 carries N-linked (GlcNAc...) asparagine glycosylation. 3 LRR repeats span residues 1512–1537, 1586–1609, and 1611–1636; these read YKQI…ELQN, SQNI…LEEE, and EQMK…AFIN. Residues Asn1664, Asn1692, Asn1718, Asn1816, and Asn1844 are each glycosylated (N-linked (GlcNAc...) asparagine). LRR repeat units follow at residues 1700–1723 and 1809–1834; these read LQEL…TIKY and LKLF…SIQN. The stretch at 1880–1903 is one LRR 13 repeat; sequence QNEIRNMNLEKNFMLDKSKKIDEE. N-linked (GlcNAc...) asparagine glycans are attached at residues Asn1913 and Asn1918. The stretch at 1944-1967 is one LRR 14 repeat; it reads KENIEKIKQEINTLSDVFKKPFFF. 6 N-linked (GlcNAc...) asparagine glycosylation sites follow: Asn2054, Asn2207, Asn2289, Asn2300, Asn2338, and Asn2405. The stretch at 2523–2548 is one LRR 15 repeat; the sequence is IKDIDNVFIKIQNNKFEQIQKYIEII. Asn2598 and Asn2752 each carry an N-linked (GlcNAc...) asparagine glycan. The stretch at 2731–2754 is one LRR 16 repeat; it reads ENIFDNIQLKKKDIDDIIININNT. Composition is skewed to basic and acidic residues over residues 2773-2782 and 2795-2804; these read KVDEKSEINN and QKNKIKDHNL. Disordered regions lie at residues 2773–2825 and 2840–2862; these read KVDE…MKEQ and HHVH…LQEQ. N-linked (GlcNAc...) asparagine glycosylation is present at Asn2811. The span at 2814–2825 shows a compositional bias: basic and acidic residues; it reads EESHQNEQMKEQ. A helical membrane pass occupies residues 2898-2918; it reads MYFASGIVVSILFLSSLGFVI. Residues 2919 to 2971 are Cytoplasmic-facing; sequence NSKNNKQEYDKEQEKQQQNDFVCDNNKMDDKSTQKYGRNQEEVMEISFDNDYI.

May in part interact with AMA1 in the moving tight junction between the parasite and the erythrocyte membranes; the interaction may facilitate junction formation and active invasion. In terms of processing, proteolytically processed into multiple fragments following schizont rupture. In the mature schizont stage prior to merozoite release, full length RH1 is processed post-Golgi into a 240 kDa N-terminal form and a 120 kDa C-terminal form containing the transmembrane region. Both forms appear not to form a complex. However, they appear to remain in close proximity in late schizonts. Following merozoite invasion of host erythrocytes, the 240 kDa form is further processed into a 140 kDa form which may be involved in the disengagement of the ligand-receptor complex required during the invasion process. Also, the 120 kDa is further cleaved into a 110 kDa form and a transmembrane 9 kDa form probably by ROM4.

The protein resides in the cell membrane. The protein localises to the secreted. It localises to the cell junction. Its subcellular location is the tight junction. It is found in the cytoplasmic vesicle. The protein resides in the secretory vesicle. The protein localises to the rhoptry. Functionally, during the asexual blood stage, binds to a sialic acid containing receptor on the surface of the host erythrocyte and thus is involved in merozoite invasion. Binds erythrocytes via a neuraminidase sensitive and trypsin-, chymotrypsin-resistant receptor. After merozoite attachment and reorientation, RH1 binding to its erythrocyte receptor triggers an increase in intracellular Ca(2+) within the parasite resulting in the release of microneme proteins such as EBA175 which in turn leads to the formation of the tight junction between parasite and host cell. In Plasmodium falciparum (isolate 3D7), this protein is Reticulocyte-binding protein homolog 1.